A 677-amino-acid chain; its full sequence is Elongation factor G 2 (677 aa).

One can recognise a tr-type G domain in the interval 8–283; sequence SRIRNIGIIA…AVVNFLPSPE (276 aa). Residues 17–24, 81–85, and 135–138 each bind GTP; these read AHIDAGKT, DTPGH, and NKMD.

Belongs to the TRAFAC class translation factor GTPase superfamily. Classic translation factor GTPase family. EF-G/EF-2 subfamily.

It is found in the cytoplasm. In terms of biological role, catalyzes the GTP-dependent ribosomal translocation step during translation elongation. During this step, the ribosome changes from the pre-translocational (PRE) to the post-translocational (POST) state as the newly formed A-site-bound peptidyl-tRNA and P-site-bound deacylated tRNA move to the P and E sites, respectively. Catalyzes the coordinated movement of the two tRNA molecules, the mRNA and conformational changes in the ribosome. The chain is Elongation factor G 2 from Syntrophus aciditrophicus (strain SB).